The primary structure comprises 276 residues: Aspartate dehydrogenase domain-containing protein (276 aa).

The protein belongs to the L-aspartate dehydrogenase family.

The chain is Aspartate dehydrogenase domain-containing protein (aspdh) from Danio rerio (Zebrafish).